The following is a 454-amino-acid chain: F-box/WD repeat-containing protein 2 (454 aa).

The region spanning Arg-54 to Ala-101 is the F-box domain. WD repeat units follow at residues Phe-139 to Val-175, Gln-179 to Trp-213, Ala-217 to Leu-255, Thr-259 to Ile-306, Lys-313 to Phe-352, Pro-364 to Leu-403, and Lys-410 to Glu-452. N6-acetyllysine is present on Lys-298.

In terms of assembly, directly interacts with SKP1 and CUL1.

Its function is as follows. Substrate-recognition component of the SCF (SKP1-CUL1-F-box protein)-type E3 ubiquitin ligase complex. The chain is F-box/WD repeat-containing protein 2 (FBXW2) from Homo sapiens (Human).